Consider the following 119-residue polypeptide: Large ribosomal subunit protein bL20 (119 aa).

Belongs to the bacterial ribosomal protein bL20 family.

In terms of biological role, binds directly to 23S ribosomal RNA and is necessary for the in vitro assembly process of the 50S ribosomal subunit. It is not involved in the protein synthesizing functions of that subunit. This Acinetobacter baumannii (strain SDF) protein is Large ribosomal subunit protein bL20.